A 55-amino-acid chain; its full sequence is Potassium channel toxin alpha-KTX 12 Sp2 (55 aa).

Positions 1–18 are cleaved as a signal peptide; that stretch reads MRLAIILLLMTTIVLTIG. Cystine bridges form between cysteine 26–cysteine 46, cysteine 32–cysteine 51, and cysteine 36–cysteine 53.

This sequence belongs to the short scorpion toxin superfamily. Potassium channel inhibitor family. Alpha-KTx 12 subfamily. In terms of tissue distribution, expressed by the venom gland.

It is found in the secreted. Its function is as follows. Blocks mouse voltage-gated potassium channels Kv1.3/KCNA3 (IC(50)=0.3-30 nM), when the channel is expressed in Jurkat T cells or in HEK293 cells. Also shows a weaker inhibition on mKv1.2/KCNA2 (IC(50)=56.9 nM) and mKv1.1/KCNA1 (IC(50)=485 nM). Probably through the inhibition of both Kv1.2/KCNA2 and Kv1.3/KCNA3, the toxin also reduces the free calcium concentration in Jurkat T cells, inhibits the activation of Jurkat T cells and reduces the release of inflammatory cytokines interleukin-2, showing a strong immunosuppressant effect. This chain is Potassium channel toxin alpha-KTX 12 Sp2, found in Scorpiops pococki (Scorpion).